The sequence spans 465 residues: Protein hedgehog (465 aa).

A lipid anchor (N-palmitoyl cysteine) is attached at C79. 7 residues coordinate Ca(2+): E143, E144, D149, T179, E180, D183, and D185. The Cholesterol glycine ester moiety is linked to residue G251.

It belongs to the hedgehog family. Interacts with shf. The C-terminal part of the hedgehog protein precursor displays an autoproteolysis activity that results in the cleavage of the full-length protein into two parts (N-product and C-product). In addition, the C-terminal part displays a cholesterol transferase activity that results by the covalent attachment of a cholesterol moiety to the C-terminal of the newly generated N-product. The N-product is the active species in both local and long-range signaling, whereas the C-product has no signaling activity. Post-translationally, cholesterylation is required for N-product targeting to lipid rafts and multimerization. In terms of processing, N-palmitoylation by Rasp of the hedgehog N-product, within the secretory pathway, is required for the embryonic and larval patterning activities of the hedgehog signal.

It localises to the nucleus. The protein localises to the cytoplasm. Its subcellular location is the cell membrane. The catalysed reaction is glycyl-L-cysteinyl-[protein] + cholesterol + H(+) = [protein]-C-terminal glycyl cholesterol ester + N-terminal L-cysteinyl-[protein]. In terms of biological role, the C-terminal part of the hedgehog protein precursor displays an autoproteolysis activity that results in the cleavage of the full-length protein into two parts (N-product and C-product). In addition, the C-terminal part displays a cholesterol transferase activity that results by the covalent attachment of a cholesterol moiety to the C-terminal of the newly generated N-product. Once cleaved, the C-product has no signaling activity and diffuses from the cell. Functionally, the dually lipidated hedgehog protein N-product is a morphogen which is essential for a variety of patterning events during development. Establishes the anterior-posterior axis of the embryonic segments and patterns the larval imaginal disks. Binds to the patched (ptc) receptor, which functions in association with smoothened (smo), to activate the transcription of target genes wingless (wg), decapentaplegic (dpp) and ptc. In the absence of hh, ptc represses the constitutive signaling activity of smo through fused (fu). Essential component of a signaling pathway which regulates the Duox-dependent gut immune response to bacterial uracil; required to activate Cad99C-dependent endosome formation, norpA-dependent Ca2+ mobilization and p38 MAPK, which are essential steps in the Duox-dependent production of reactive oxygen species (ROS) in response to intestinal bacterial infection. During photoreceptor differentiation, it up-regulates transcription of Ubr3, which in turn promotes the hh-signaling pathway by mediating the ubiquitination and degradation of cos. This chain is Protein hedgehog, found in Drosophila erecta (Fruit fly).